A 781-amino-acid polypeptide reads, in one-letter code: DEAD-box ATP-dependent RNA helicase 50 (781 aa).

Disordered regions lie at residues 72-103 (EFAPPPSSDLLSSIPSESARRNGSRSRGLTAS), 117-148 (GKVTQKKQHMSHNEEEDEDDASDENYSADEGF), 166-240 (IPRS…KGDR), 254-292 (GRAIDEVSNPRKFNDNERAESRSSYSRDSSANSRGREDR), and 313-342 (YNPRRFTDNERGLRGGSHSKGSDTNSRGWG). Positions 79–88 (SDLLSSIPSE) are enriched in low complexity. The span at 130-143 (EEEDEDDASDENYS) shows a compositional bias: acidic residues. Over residues 171–197 (KSAERNEVKRASKVRESRESRRDLDRL) the composition is skewed to basic and acidic residues. Acidic residues predominate over residues 198–208 (EGDDEDVDEVS). Polar residues predominate over residues 216–226 (NQRAGSRSSYS). The span at 254–274 (GRAIDEVSNPRKFNDNERAES) shows a compositional bias: basic and acidic residues. A compositionally biased stretch (low complexity) spans 275 to 286 (RSSYSRDSSANS). Residues 313–325 (YNPRRFTDNERGL) are compositionally biased toward basic and acidic residues. The short motif at 374 to 402 (KTFAEIGCSEDMMKALKEQNFDRPAHIQA) is the Q motif element. The Helicase ATP-binding domain maps to 405 to 586 (FSPVIDGKSC…VEVFPDCEVV (182 aa)). 418–425 (DQSGSGKT) lines the ATP pocket. A DEAD box motif is present at residues 533-536 (DEVD). Residues 621–781 (NKKTALLQIM…DVPNAYEFTT (161 aa)) form the Helicase C-terminal domain.

The protein belongs to the DEAD box helicase family.

The catalysed reaction is ATP + H2O = ADP + phosphate + H(+). Probably involved in resistance to biotic and abiotic stresses. This chain is DEAD-box ATP-dependent RNA helicase 50 (RH50), found in Arabidopsis thaliana (Mouse-ear cress).